The sequence spans 178 residues: MNAERLTRLLEPVVSQVGLELDRVDVVPAGRRRLVRVTIDGDGPDGHGPSLDEISEATAEISHCLDDSGAMGESPYTLEVSSRGVSTPLTQPRHYRRNIGHLVRFTLNPAEEQKSGETFDGRIAEAGEEVVTLEVEAENSKPHKPVYTTREVQLADVAKAVVQVELNRRDAQASKEEN.

It belongs to the RimP family.

The protein resides in the cytoplasm. Its function is as follows. Required for maturation of 30S ribosomal subunits. This chain is Ribosome maturation factor RimP, found in Cutibacterium acnes (strain DSM 16379 / KPA171202) (Propionibacterium acnes).